We begin with the raw amino-acid sequence, 273 residues long: 3-methyl-2-oxobutanoate hydroxymethyltransferase (273 aa).

Mg(2+)-binding residues include Asp49 and Asp88. 3-methyl-2-oxobutanoate is bound by residues 49-50 (DS), Asp88, and Lys118. Glu120 contributes to the Mg(2+) binding site. Glu187 serves as the catalytic Proton acceptor.

The protein belongs to the PanB family. As to quaternary structure, homodecamer; pentamer of dimers. Mg(2+) is required as a cofactor.

It localises to the cytoplasm. The enzyme catalyses 3-methyl-2-oxobutanoate + (6R)-5,10-methylene-5,6,7,8-tetrahydrofolate + H2O = 2-dehydropantoate + (6S)-5,6,7,8-tetrahydrofolate. It functions in the pathway cofactor biosynthesis; (R)-pantothenate biosynthesis; (R)-pantoate from 3-methyl-2-oxobutanoate: step 1/2. In terms of biological role, catalyzes the reversible reaction in which hydroxymethyl group from 5,10-methylenetetrahydrofolate is transferred onto alpha-ketoisovalerate to form ketopantoate. This chain is 3-methyl-2-oxobutanoate hydroxymethyltransferase, found in Rhizobium etli (strain ATCC 51251 / DSM 11541 / JCM 21823 / NBRC 15573 / CFN 42).